Consider the following 258-residue polypeptide: UPF0246 protein CKO_03380 (258 aa).

Belongs to the UPF0246 family.

The chain is UPF0246 protein CKO_03380 from Citrobacter koseri (strain ATCC BAA-895 / CDC 4225-83 / SGSC4696).